The primary structure comprises 364 residues: Aspartate aminotransferase (364 aa).

L-aspartate is bound by residues Gly23, Trp99, and Asn143. An N6-(pyridoxal phosphate)lysine modification is found at Lys200. Arg320 contacts L-aspartate.

Belongs to the class-I pyridoxal-phosphate-dependent aminotransferase family. Homodimer. Pyridoxal 5'-phosphate is required as a cofactor.

The protein resides in the cytoplasm. The catalysed reaction is L-aspartate + 2-oxoglutarate = oxaloacetate + L-glutamate. The chain is Aspartate aminotransferase (aspC) from Thermococcus kodakarensis (strain ATCC BAA-918 / JCM 12380 / KOD1) (Pyrococcus kodakaraensis (strain KOD1)).